We begin with the raw amino-acid sequence, 259 residues long: Phosphoribosylaminoimidazole-succinocarboxamide synthase (259 aa).

This sequence belongs to the SAICAR synthetase family.

The enzyme catalyses 5-amino-1-(5-phospho-D-ribosyl)imidazole-4-carboxylate + L-aspartate + ATP = (2S)-2-[5-amino-1-(5-phospho-beta-D-ribosyl)imidazole-4-carboxamido]succinate + ADP + phosphate + 2 H(+). The protein operates within purine metabolism; IMP biosynthesis via de novo pathway; 5-amino-1-(5-phospho-D-ribosyl)imidazole-4-carboxamide from 5-amino-1-(5-phospho-D-ribosyl)imidazole-4-carboxylate: step 1/2. The chain is Phosphoribosylaminoimidazole-succinocarboxamide synthase from Zymomonas mobilis subsp. mobilis (strain ATCC 31821 / ZM4 / CP4).